Consider the following 437-residue polypeptide: Inactive peptidyl-prolyl cis-trans isomerase shutdown (437 aa).

One can recognise a PPIase FKBP-type domain in the interval 92–178 (DSEVTIHYAA…RPEPALFVIV (87 aa)). TPR repeat units lie at residues 209-242 (VNALRADAKELYKKKKYVKAIKNYQQAISVLRLS), 258-294 (VNAYLNLAVCYYKTNKPKHVLNMCECLDRLIDTEKHC), and 295-327 (KALYYYGKAHEMLGKTEMAIKYYKKALKLEPKN).

The protein belongs to the FKBP6 family. As to quaternary structure, interacts with Hsp83.

It localises to the cytoplasm. Functionally, co-chaperone required during oogenesis to repress transposable elements and prevent their mobilization, which is essential for the germline integrity. Acts via the piRNA metabolic process, which mediates the repression of transposable elements during meiosis by forming complexes composed of piRNAs and Piwi proteins and govern the methylation and subsequent repression of transposons. Acts as a co-chaperone via its interaction with Hsp83/HSP90 and is required for the biogenesis of all three piRNA major populations. This Bombyx mori (Silk moth) protein is Inactive peptidyl-prolyl cis-trans isomerase shutdown (shu).